Consider the following 268-residue polypeptide: Ribosomal RNA small subunit methyltransferase A (268 aa).

Residues asparagine 12, leucine 14, glycine 38, glutamate 59, aspartate 82, and asparagine 107 each coordinate S-adenosyl-L-methionine.

The protein belongs to the class I-like SAM-binding methyltransferase superfamily. rRNA adenine N(6)-methyltransferase family. RsmA subfamily.

The protein resides in the cytoplasm. It carries out the reaction adenosine(1518)/adenosine(1519) in 16S rRNA + 4 S-adenosyl-L-methionine = N(6)-dimethyladenosine(1518)/N(6)-dimethyladenosine(1519) in 16S rRNA + 4 S-adenosyl-L-homocysteine + 4 H(+). In terms of biological role, specifically dimethylates two adjacent adenosines (A1518 and A1519) in the loop of a conserved hairpin near the 3'-end of 16S rRNA in the 30S particle. May play a critical role in biogenesis of 30S subunits. The protein is Ribosomal RNA small subunit methyltransferase A of Onion yellows phytoplasma (strain OY-M).